Consider the following 396-residue polypeptide: MSEYSLFTSESVSEGHPDKIADQISDAVLDAIIAQDKHARVAVETLVKTGVAIVAGEVTTSAWVDLEQIVRDVICDIGYTSSDVGFDGATCGVMNIIGKQSPDINQGVDRAKPEDQGAGDQGLMFGYASNETDVLMPAPITFSHQLVQRQAEARKSGLLPWLRPDAKSQVTCRYEGGKVVGIDAVVLSTQHNPEVSYNDLREGVMELIVKHVLPAELLSKDTQFHINPTGQFIIGGPVGDCGLTGRKIIVDSYGGMARHGGGAFSGKDPSKVDRSAAYAGRYVAKNIVAAGLAERCEIQVSYAIGVAQPTSISLNTFGTGKISDDKIIKLVREVFDLRPYAITTMLDLLHPMYQETAAYGHFGRAPQTKTVGEDTFSTFTWEKTDRADALRSAAGL.

H16 provides a ligand contact to ATP. D18 is a binding site for Mg(2+). Residue E44 participates in K(+) binding. Residues E57 and Q100 each coordinate L-methionine. The flexible loop stretch occupies residues 100–110; that stretch reads QSPDINQGVDR. ATP contacts are provided by residues 165 to 167, D240, 246 to 247, A263, and K267; these read DAK and RK. Residue D240 participates in L-methionine binding. K271 provides a ligand contact to L-methionine.

The protein belongs to the AdoMet synthase family. In terms of assembly, homotetramer; dimer of dimers. It depends on Mg(2+) as a cofactor. K(+) serves as cofactor.

It is found in the cytoplasm. It carries out the reaction L-methionine + ATP + H2O = S-adenosyl-L-methionine + phosphate + diphosphate. It participates in amino-acid biosynthesis; S-adenosyl-L-methionine biosynthesis; S-adenosyl-L-methionine from L-methionine: step 1/1. Its function is as follows. Catalyzes the formation of S-adenosylmethionine (AdoMet) from methionine and ATP. The overall synthetic reaction is composed of two sequential steps, AdoMet formation and the subsequent tripolyphosphate hydrolysis which occurs prior to release of AdoMet from the enzyme. In Pseudomonas fluorescens (strain Pf0-1), this protein is S-adenosylmethionine synthase.